Consider the following 318-residue polypeptide: Methionyl-tRNA formyltransferase (318 aa).

Residue 112–115 (SILP) coordinates (6S)-5,6,7,8-tetrahydrofolate.

This sequence belongs to the Fmt family.

It carries out the reaction L-methionyl-tRNA(fMet) + (6R)-10-formyltetrahydrofolate = N-formyl-L-methionyl-tRNA(fMet) + (6S)-5,6,7,8-tetrahydrofolate + H(+). Functionally, attaches a formyl group to the free amino group of methionyl-tRNA(fMet). The formyl group appears to play a dual role in the initiator identity of N-formylmethionyl-tRNA by promoting its recognition by IF2 and preventing the misappropriation of this tRNA by the elongation apparatus. This chain is Methionyl-tRNA formyltransferase, found in Shewanella baltica (strain OS223).